Here is a 376-residue protein sequence, read N- to C-terminus: Uroporphyrinogen decarboxylase (376 aa).

Substrate-binding positions include 29-33 (RQAGR), D79, Y155, S210, and H342.

The protein belongs to the uroporphyrinogen decarboxylase family. In terms of assembly, homodimer.

Its subcellular location is the cytoplasm. It catalyses the reaction uroporphyrinogen III + 4 H(+) = coproporphyrinogen III + 4 CO2. Its pathway is porphyrin-containing compound metabolism; protoporphyrin-IX biosynthesis; coproporphyrinogen-III from 5-aminolevulinate: step 4/4. Its function is as follows. Catalyzes the decarboxylation of four acetate groups of uroporphyrinogen-III to yield coproporphyrinogen-III. This Paracidovorax citrulli (strain AAC00-1) (Acidovorax citrulli) protein is Uroporphyrinogen decarboxylase.